The primary structure comprises 256 residues: Acetyl-coenzyme A carboxylase carboxyl transferase subunit alpha (256 aa).

The region spanning 1–236 is the CoA carboxyltransferase C-terminal domain; sequence MTDVARILKE…KEHLKTEINQ (236 aa).

Belongs to the AccA family. As to quaternary structure, acetyl-CoA carboxylase is a heterohexamer composed of biotin carboxyl carrier protein (AccB), biotin carboxylase (AccC) and two subunits each of ACCase subunit alpha (AccA) and ACCase subunit beta (AccD).

The protein resides in the cytoplasm. The enzyme catalyses N(6)-carboxybiotinyl-L-lysyl-[protein] + acetyl-CoA = N(6)-biotinyl-L-lysyl-[protein] + malonyl-CoA. Its pathway is lipid metabolism; malonyl-CoA biosynthesis; malonyl-CoA from acetyl-CoA: step 1/1. Its function is as follows. Component of the acetyl coenzyme A carboxylase (ACC) complex. First, biotin carboxylase catalyzes the carboxylation of biotin on its carrier protein (BCCP) and then the CO(2) group is transferred by the carboxyltransferase to acetyl-CoA to form malonyl-CoA. The polypeptide is Acetyl-coenzyme A carboxylase carboxyl transferase subunit alpha (Streptococcus uberis (strain ATCC BAA-854 / 0140J)).